The sequence spans 414 residues: Bystin (414 aa).

The segment covering 1-11 has biased composition (basic residues); the sequence is MSAKRNTKLRH. The tract at residues 1-91 is disordered; that stretch reads MSAKRNTKLR…PSDDEGQADD (91 aa). Basic and acidic residues predominate over residues 12–24; the sequence is APLEHAYVDDKSV. Positions 25–34 are enriched in basic residues; that stretch reads RRNKRSKQRG.

This sequence belongs to the bystin family.

The protein resides in the nucleus. It is found in the nucleolus. Functionally, required for processing of 20S pre-rRNA precursor and biogenesis of 40S ribosomal subunits. The sequence is that of Bystin (bysl) from Monosiga brevicollis (Choanoflagellate).